Here is a 382-residue protein sequence, read N- to C-terminus: Lipoyl synthase, mitochondrial (382 aa).

The N-terminal 30 residues, 1–30, are a transit peptide targeting the mitochondrion; sequence MHGRRHLAASLARALTYAPSRSISSTPSLL. A compositionally biased stretch (polar residues) spans 25–34; it reads STPSLLQTLD. The segment at 25-46 is disordered; it reads STPSLLQTLDPSTPSPAAAPPT. Cysteine 112, cysteine 117, cysteine 123, cysteine 143, cysteine 147, cysteine 150, and serine 359 together coordinate [4Fe-4S] cluster. In terms of domain architecture, Radical SAM core spans 128–348; it reads ETGTATATIM…RSLGVDMGFR (221 aa).

The protein belongs to the radical SAM superfamily. Lipoyl synthase family. Requires [4Fe-4S] cluster as cofactor.

It localises to the mitochondrion. It carries out the reaction [[Fe-S] cluster scaffold protein carrying a second [4Fe-4S](2+) cluster] + N(6)-octanoyl-L-lysyl-[protein] + 2 oxidized [2Fe-2S]-[ferredoxin] + 2 S-adenosyl-L-methionine + 4 H(+) = [[Fe-S] cluster scaffold protein] + N(6)-[(R)-dihydrolipoyl]-L-lysyl-[protein] + 4 Fe(3+) + 2 hydrogen sulfide + 2 5'-deoxyadenosine + 2 L-methionine + 2 reduced [2Fe-2S]-[ferredoxin]. It participates in protein modification; protein lipoylation via endogenous pathway; protein N(6)-(lipoyl)lysine from octanoyl-[acyl-carrier-protein]: step 2/2. Functionally, catalyzes the radical-mediated insertion of two sulfur atoms into the C-6 and C-8 positions of the octanoyl moiety bound to the lipoyl domains of lipoate-dependent enzymes, thereby converting the octanoylated domains into lipoylated derivatives. This chain is Lipoyl synthase, mitochondrial, found in Oryza sativa subsp. japonica (Rice).